We begin with the raw amino-acid sequence, 386 residues long: Homogentisate solanesyltransferase, chloroplastic (386 aa).

Residues 1–69 (MELSISQSPR…STNYRKISIR (69 aa)) constitute a chloroplast transit peptide. 8 consecutive transmembrane segments (helical) span residues 130 to 150 (VLKALSGLLALICGNGYIVGI), 181 to 201 (LVIFFAIAGLLVVGFNFGPFI), 204 to 220 (LYSLGLFLGTIYSVPPL), 225 to 245 (FPVAAFLIIATVRGFLLNFGV), 259 to 279 (WSAPVAFITSFVTLFALVIAI), 306 to 326 (IAFLGSGLLLVNYVSAISLAF), 335 to 355 (SLMIPAHVILASGLIFQTWVL), and 365 to 385 (ISGYYRFIWNLFYAEYLLFPF).

This sequence belongs to the UbiA prenyltransferase family.

The protein resides in the plastid. It localises to the chloroplast membrane. It carries out the reaction all-trans-nonaprenyl diphosphate + homogentisate + H(+) = 2-methyl-6-(all-trans-nonaprenyl)benzene-1,4-diol + CO2 + diphosphate. With respect to regulation, inhibited by haloxydine (3,5-dichloro-2,6-difluoro-4-haloxypyridine). Involved in the synthesis of plastoquinone-9. Can use both homogentisic acid and 2,5-dihydroxyphenylacetic acid gamma-lactone as prenyl acceptors, and solanesyl diphosphate &gt; farnesyl diphosphate &gt; geranylgeranyl diphosphate &gt;&gt; phytyl diphosphate as prenyl donors. Do not catalyze the decardoxylation of homogentisate uncoupled from prenylation. This is Homogentisate solanesyltransferase, chloroplastic (HST) from Arabidopsis thaliana (Mouse-ear cress).